A 194-amino-acid polypeptide reads, in one-letter code: Glycerol-3-phosphate acyltransferase (194 aa).

6 helical membrane-spanning segments follow: residues 2 to 22, 52 to 72, 80 to 100, 112 to 132, 137 to 157, and 161 to 181; these read AFFC…GVWI, LGVA…YIAS, DLVI…FISF, VFLF…ILVA, YVSL…FFTH, and YLFA…KTNI.

The protein belongs to the PlsY family. As to quaternary structure, probably interacts with PlsX.

The protein resides in the cell inner membrane. It carries out the reaction an acyl phosphate + sn-glycerol 3-phosphate = a 1-acyl-sn-glycero-3-phosphate + phosphate. It functions in the pathway lipid metabolism; phospholipid metabolism. In terms of biological role, catalyzes the transfer of an acyl group from acyl-phosphate (acyl-PO(4)) to glycerol-3-phosphate (G3P) to form lysophosphatidic acid (LPA). This enzyme utilizes acyl-phosphate as fatty acyl donor, but not acyl-CoA or acyl-ACP. The sequence is that of Glycerol-3-phosphate acyltransferase from Fusobacterium nucleatum subsp. nucleatum (strain ATCC 25586 / DSM 15643 / BCRC 10681 / CIP 101130 / JCM 8532 / KCTC 2640 / LMG 13131 / VPI 4355).